A 196-amino-acid polypeptide reads, in one-letter code: Pyridoxal 5'-phosphate synthase subunit PdxT (196 aa).

47-49 (GES) is an L-glutamine binding site. Residue cysteine 79 is the Nucleophile of the active site. L-glutamine contacts are provided by residues arginine 106 and 134-135 (IR). Catalysis depends on charge relay system residues histidine 170 and glutamate 172.

It belongs to the glutaminase PdxT/SNO family. In terms of assembly, in the presence of PdxS, forms a dodecamer of heterodimers. Only shows activity in the heterodimer.

The catalysed reaction is aldehydo-D-ribose 5-phosphate + D-glyceraldehyde 3-phosphate + L-glutamine = pyridoxal 5'-phosphate + L-glutamate + phosphate + 3 H2O + H(+). It carries out the reaction L-glutamine + H2O = L-glutamate + NH4(+). The protein operates within cofactor biosynthesis; pyridoxal 5'-phosphate biosynthesis. Functionally, catalyzes the hydrolysis of glutamine to glutamate and ammonia as part of the biosynthesis of pyridoxal 5'-phosphate. The resulting ammonia molecule is channeled to the active site of PdxS. The protein is Pyridoxal 5'-phosphate synthase subunit PdxT of Bacillus cytotoxicus (strain DSM 22905 / CIP 110041 / 391-98 / NVH 391-98).